The primary structure comprises 104 residues: Urease subunit beta (104 aa).

Belongs to the urease beta subunit family. Heterotrimer of UreA (gamma), UreB (beta) and UreC (alpha) subunits. Three heterotrimers associate to form the active enzyme.

The protein resides in the cytoplasm. It carries out the reaction urea + 2 H2O + H(+) = hydrogencarbonate + 2 NH4(+). Its pathway is nitrogen metabolism; urea degradation; CO(2) and NH(3) from urea (urease route): step 1/1. The polypeptide is Urease subunit beta (Rhodopseudomonas palustris (strain BisB5)).